Consider the following 585-residue polypeptide: L-gulonolactone oxidase 3 (585 aa).

The first 24 residues, Met-1–Ser-24, serve as a signal peptide directing secretion. Residues Lys-51–Ala-233 enclose the FAD-binding PCMH-type domain.

Belongs to the oxygen-dependent FAD-linked oxidoreductase family. FAD serves as cofactor.

The protein localises to the vacuole. The enzyme catalyses L-gulono-1,4-lactone + O2 = L-ascorbate + H2O2 + H(+). It participates in cofactor biosynthesis; L-ascorbate biosynthesis. In terms of biological role, catalyzes the oxidation of L-gulono-1,4-lactone to ascorbic acid. L-gulono-1,4-lactone is oxidized to hydrogen peroxide and L-xylo-hexulonolactone which spontaneously isomerizes to L-ascorbate. This is L-gulonolactone oxidase 3 from Arabidopsis thaliana (Mouse-ear cress).